The sequence spans 51 residues: Proteinase inhibitor PTI (51 aa).

4 disulfides stabilise this stretch: Cys3/Cys40, Cys6/Cys24, Cys7/Cys36, and Cys13/Cys49.

This sequence belongs to the protease inhibitor I20 (potato type II proteinase inhibitor) family.

Its subcellular location is the secreted. This chain is Proteinase inhibitor PTI, found in Solanum tuberosum (Potato).